A 1411-amino-acid chain; its full sequence is ATP-dependent permease PDR11 (1411 aa).

Residues serine 2–glutamine 388 are Cytoplasmic-facing. The region spanning valine 31–asparagine 273 is the ABC transporter 1 domain. Residues phenylalanine 389–threonine 409 form a helical membrane-spanning segment. The Extracellular segment spans residues threonine 410–serine 418. Residues leucine 419–phenylalanine 439 traverse the membrane as a helical segment. Topologically, residues glutamine 440 to lysine 471 are cytoplasmic. A helical membrane pass occupies residues phenylalanine 472–alanine 492. Topologically, residues alanine 493–arginine 494 are extracellular. The chain crosses the membrane as a helical span at residues phenylalanine 495–leucine 515. Residues threonine 516–serine 524 lie on the Cytoplasmic side of the membrane. The helical transmembrane segment at methionine 525–isoleucine 545 threads the bilayer. The Extracellular segment spans residues tyrosine 546–phenylalanine 636. Asparagine 595 carries an N-linked (GlcNAc...) asparagine glycan. The helical transmembrane segment at glycine 637–isoleucine 657 threads the bilayer. Residues threonine 658–threonine 1090 are Cytoplasmic-facing. Residues isoleucine 751 to phenylalanine 979 enclose the ABC transporter 2 domain. Glycine 782–threonine 789 serves as a coordination point for ATP. A helical membrane pass occupies residues tyrosine 1091–tryptophan 1111. At arginine 1112 to isoleucine 1117 the chain is on the extracellular side. The chain crosses the membrane as a helical span at residues asparagine 1118–isoleucine 1138. Topologically, residues asparagine 1139–glutamate 1175 are cytoplasmic. A helical membrane pass occupies residues leucine 1176–phenylalanine 1196. The Extracellular segment spans residues glutamate 1197–glycine 1204. The chain crosses the membrane as a helical span at residues valine 1205–leucine 1225. The Cytoplasmic segment spans residues tyrosine 1226–aspartate 1230. A helical membrane pass occupies residues leucine 1231–valine 1251. Residues methionine 1252 to asparagine 1355 are Extracellular-facing. 3 N-linked (GlcNAc...) asparagine glycosylation sites follow: asparagine 1289, asparagine 1324, and asparagine 1346. Residues phenylalanine 1356–leucine 1376 traverse the membrane as a helical segment. Residues threonine 1377–valine 1411 lie on the Cytoplasmic side of the membrane.

It belongs to the ABC transporter superfamily. ABCG family. PDR (TC 3.A.1.205) subfamily.

The protein resides in the membrane. In terms of biological role, transporter involved in the uptake of sterol. This Saccharomyces cerevisiae (strain ATCC 204508 / S288c) (Baker's yeast) protein is ATP-dependent permease PDR11 (PDR11).